A 330-amino-acid polypeptide reads, in one-letter code: Aspartate--ammonia ligase (330 aa).

Belongs to the class-II aminoacyl-tRNA synthetase family. AsnA subfamily.

The protein localises to the cytoplasm. The enzyme catalyses L-aspartate + NH4(+) + ATP = L-asparagine + AMP + diphosphate + H(+). Its pathway is amino-acid biosynthesis; L-asparagine biosynthesis; L-asparagine from L-aspartate (ammonia route): step 1/1. The sequence is that of Aspartate--ammonia ligase from Streptococcus pyogenes serotype M1.